The following is a 474-amino-acid chain: Sialyltransferase-like protein 1 (474 aa).

Topologically, residues 1–14 (MRSHQAGRKLPLLQ) are cytoplasmic. A helical; Signal-anchor for type II membrane protein transmembrane segment spans residues 15–35 (LLGCVAVFSVFVFTIQSSFFA). Residues 36 to 474 (DNNRKLDLQP…CVRHPLKLDT (439 aa)) lie on the Lumenal side of the membrane. N-linked (GlcNAc...) asparagine glycosylation is found at Asn-88, Asn-120, Asn-155, and Asn-243. A disordered region spans residues 376–421 (RLQRSQQPTSSKRDGSGQFGNCKVWGDADPTKGPVSGSPDMSETRK).

The protein belongs to the glycosyltransferase 29 family. As to expression, highly expressed in inflorescences and siliques and at lower levels in roots, leaves and stems.

Its subcellular location is the golgi apparatus membrane. In terms of biological role, required for normal pollen grain germination and pollen tube growth. May not be required for pollen development and female gametophytic function. This is Sialyltransferase-like protein 1 from Arabidopsis thaliana (Mouse-ear cress).